Consider the following 523-residue polypeptide: Tyrosine ammonia-lyase (523 aa).

Catalysis depends on Y60, which acts as the Proton donor/acceptor. H89 contacts substrate. The 5-imidazolinone (Ala-Gly) cross-link spans A149–G151. At S150 the chain carries 2,3-didehydroalanine (Ser). Substrate-binding positions include R303 and N432 to Q436.

It belongs to the PAL/histidase family. In terms of assembly, homotetramer. Post-translationally, contains an active site 4-methylidene-imidazol-5-one (MIO), which is formed autocatalytically by cyclization and dehydration of residues Ala-Ser-Gly.

The enzyme catalyses L-tyrosine = (E)-4-coumarate + NH4(+). Functionally, catalyzes the non-oxidative deamination of L-tyrosine. Has very low phenylalanine ammonia-lyase activity (in vitro). The sequence is that of Tyrosine ammonia-lyase (hutH) from Cereibacter sphaeroides (strain ATCC 17023 / DSM 158 / JCM 6121 / CCUG 31486 / LMG 2827 / NBRC 12203 / NCIMB 8253 / ATH 2.4.1.) (Rhodobacter sphaeroides).